A 645-amino-acid polypeptide reads, in one-letter code: Nucleolar GTP-binding protein 1 (645 aa).

One can recognise an OBG-type G domain in the interval 168 to 340 (RTLLICGYPN…VRNKACEKLL (173 aa)). Residues 174–181 (GYPNVGKS), 220–224 (DTPGI), and 288–291 (NKTD) each bind GTP. Residues 567-645 (GQNDSMASGS…KRGIGKSDFR (79 aa)) are disordered. Residues 612-624 (NRDARQGEADRHA) are compositionally biased toward basic and acidic residues.

This sequence belongs to the TRAFAC class OBG-HflX-like GTPase superfamily. OBG GTPase family. NOG subfamily.

The protein resides in the nucleus. It localises to the nucleolus. Its function is as follows. Involved in the biogenesis of the 60S ribosomal subunit. The polypeptide is Nucleolar GTP-binding protein 1 (NOG1) (Candida glabrata (strain ATCC 2001 / BCRC 20586 / JCM 3761 / NBRC 0622 / NRRL Y-65 / CBS 138) (Yeast)).